Here is a 70-residue protein sequence, read N- to C-terminus: Gas vesicle protein A (70 aa).

This sequence belongs to the gas vesicle GvpA family. As to quaternary structure, the gas vesicle shell is 2 nm thick and consists of a single layer of this protein. It forms helical ribs nearly perpendicular to the long axis of the vesicle.

It is found in the gas vesicle shell. Its function is as follows. Gas vesicles are hollow, gas filled proteinaceous nanostructures found in some microorganisms. During planktonic growth they allow positioning of the organism at a favorable depth for light or nutrient acquisition. GvpA forms the protein shell. The chain is Gas vesicle protein A from Ancylobacter aquaticus.